The following is a 528-amino-acid chain: Probable methylmalonate-semialdehyde/malonate-semialdehyde dehydrogenase [acylating], mitochondrial (528 aa).

The N-terminal 26 residues, methionine 1–leucine 26, are a transit peptide targeting the mitochondrion. Phenylalanine 175, lysine 199, glutamate 202, and arginine 203 together coordinate NAD(+). Cysteine 307 (nucleophile) is an active-site residue. Glutamate 408 contacts NAD(+).

Belongs to the aldehyde dehydrogenase family. Homotetramer.

The protein resides in the mitochondrion. It carries out the reaction 2-methyl-3-oxopropanoate + NAD(+) + CoA + H2O = propanoyl-CoA + hydrogencarbonate + NADH + H(+). The enzyme catalyses 3-oxopropanoate + NAD(+) + CoA + H2O = hydrogencarbonate + acetyl-CoA + NADH + H(+). Functionally, probable malonate and methylmalonate semialdehyde dehydrogenase involved in the catabolism of valine, thymine, and compounds catabolized by way of beta-alanine, including uracil and cytidine. This chain is Probable methylmalonate-semialdehyde/malonate-semialdehyde dehydrogenase [acylating], mitochondrial (mmsdh), found in Dictyostelium discoideum (Social amoeba).